The chain runs to 141 residues: Alpha-lactalbumin (141 aa).

An N-terminal signal peptide occupies residues 1–19 (MMPLVPLLLVSIVFPGIQA). The C-type lysozyme domain occupies 20-141 (TQLTRCELTE…ENLEQWVCKK (122 aa)). 4 cysteine pairs are disulfide-bonded: cysteine 25–cysteine 139, cysteine 47–cysteine 130, cysteine 80–cysteine 96, and cysteine 92–cysteine 110. Asparagine 64 is a glycosylation site (N-linked (GlcNAc...) asparagine). Ca(2+)-binding residues include aspartate 101, aspartate 106, and aspartate 107.

It belongs to the glycosyl hydrolase 22 family. Lactose synthase (LS) is a heterodimer of a catalytic component, beta1,4-galactosyltransferase (beta4Gal-T1) and a regulatory component, alpha-lactalbumin (LA). As to expression, mammary gland specific. Secreted in milk.

Its subcellular location is the secreted. Its function is as follows. Regulatory subunit of lactose synthase, changes the substrate specificity of galactosyltransferase in the mammary gland making glucose a good acceptor substrate for this enzyme. This enables LS to synthesize lactose, the major carbohydrate component of milk. In other tissues, galactosyltransferase transfers galactose onto the N-acetylglucosamine of the oligosaccharide chains in glycoproteins. This chain is Alpha-lactalbumin (LALBA), found in Oryctolagus cuniculus (Rabbit).